We begin with the raw amino-acid sequence, 543 residues long: Methionine--tRNA ligase (543 aa).

The 'HIGH' region signature appears at P13–H23. Zn(2+)-binding residues include C145, C148, C158, and C161. Residues Q334–S338 carry the 'KMSKS' region motif. K337 serves as a coordination point for ATP.

The protein belongs to the class-I aminoacyl-tRNA synthetase family. MetG type 1 subfamily. It depends on Zn(2+) as a cofactor.

It is found in the cytoplasm. It catalyses the reaction tRNA(Met) + L-methionine + ATP = L-methionyl-tRNA(Met) + AMP + diphosphate. In terms of biological role, is required not only for elongation of protein synthesis but also for the initiation of all mRNA translation through initiator tRNA(fMet) aminoacylation. In Thermoplasma volcanium (strain ATCC 51530 / DSM 4299 / JCM 9571 / NBRC 15438 / GSS1), this protein is Methionine--tRNA ligase.